The following is a 609-amino-acid chain: Chaperone protein DnaK (609 aa).

Threonine 172 bears the Phosphothreonine; by autocatalysis mark. Residues 578 to 609 form a disordered region; sequence QAQAQQQAGAGGAAKKDENVVDAEFEEVKDDK. The segment covering 597–609 has biased composition (acidic residues); sequence VVDAEFEEVKDDK.

This sequence belongs to the heat shock protein 70 family.

Its function is as follows. Acts as a chaperone. The chain is Chaperone protein DnaK from Geobacillus sp. (strain WCH70).